The sequence spans 398 residues: Acetate kinase (398 aa).

Residue Asn7 coordinates Mg(2+). Lys14 serves as a coordination point for ATP. A substrate-binding site is contributed by Arg92. The active-site Proton donor/acceptor is the Asp149. Residues 208–212, 283–285, and 331–335 contribute to the ATP site; these read HLGNG, DCR, and GIGEN. Glu385 contributes to the Mg(2+) binding site.

Belongs to the acetokinase family. In terms of assembly, homodimer. It depends on Mg(2+) as a cofactor. Mn(2+) is required as a cofactor.

The protein localises to the cytoplasm. The enzyme catalyses acetate + ATP = acetyl phosphate + ADP. It participates in metabolic intermediate biosynthesis; acetyl-CoA biosynthesis; acetyl-CoA from acetate: step 1/2. In terms of biological role, catalyzes the formation of acetyl phosphate from acetate and ATP. Can also catalyze the reverse reaction. This Fusobacterium nucleatum subsp. nucleatum (strain ATCC 25586 / DSM 15643 / BCRC 10681 / CIP 101130 / JCM 8532 / KCTC 2640 / LMG 13131 / VPI 4355) protein is Acetate kinase.